The sequence spans 131 residues: Small ribosomal subunit protein uS8 (131 aa).

The protein belongs to the universal ribosomal protein uS8 family. In terms of assembly, part of the 30S ribosomal subunit. Contacts proteins S5 and S12.

Its function is as follows. One of the primary rRNA binding proteins, it binds directly to 16S rRNA central domain where it helps coordinate assembly of the platform of the 30S subunit. The chain is Small ribosomal subunit protein uS8 from Acholeplasma laidlawii (strain PG-8A).